Here is a 147-residue protein sequence, read N- to C-terminus: CLAVATA3/ESR (CLE)-related protein 4C (147 aa).

The first 21 residues, 1-21, serve as a signal peptide directing secretion; the sequence is MATNTMLCLFVISVVLALAFA. The interval 21-83 is required for secretion from the host cytoplasm to the host apoplasm; sequence ATNKKGDEEP…SNQLPNNNWM (63 aa). Asn32 is a glycosylation site (N-linked (GlcNAc...) asparagine). Disordered regions lie at residues 57–86 and 116–147; these read GADA…MAPP and RKTG…PIHH. Positions 125–137 are enriched in basic and acidic residues; sequence HHEETTLEQEKRV. The CLE signature appears at 136–147; that stretch reads RVAGAGPDPIHH.

This sequence belongs to the CLV3/ESR signal peptide family. As to expression, highly expressed exclusively within the dorsal esophageal gland cell during syncytium formation in host plants.

It is found in the secreted. The protein resides in the host cytoplasm. The protein localises to the host extracellular space. Its subcellular location is the extracellular space. It localises to the apoplast. Mimics host plant CLE extracellular signal peptides that regulate cell fate. May play a role in the differentiation or division of feeding cells (syncytia) induced in plant roots during infection. The protein is CLAVATA3/ESR (CLE)-related protein 4C (CLE-4C) of Globodera rostochiensis (Golden nematode worm).